A 152-amino-acid polypeptide reads, in one-letter code: Large ribosomal subunit protein bL9 (152 aa).

This sequence belongs to the bacterial ribosomal protein bL9 family.

In terms of biological role, binds to the 23S rRNA. In Acaryochloris marina (strain MBIC 11017), this protein is Large ribosomal subunit protein bL9.